Consider the following 92-residue polypeptide: Small ribosomal subunit protein uS19c (92 aa).

Belongs to the universal ribosomal protein uS19 family.

It localises to the plastid. The protein resides in the chloroplast. Its function is as follows. Protein S19 forms a complex with S13 that binds strongly to the 16S ribosomal RNA. This chain is Small ribosomal subunit protein uS19c, found in Nicotiana tomentosiformis (Tobacco).